Reading from the N-terminus, the 676-residue chain is Ribonuclease R (676 aa).

Residues 207 to 527 (RKDLRDLLCF…LIVHRLLFNP (321 aa)) form the RNB domain. The S1 motif domain maps to 566-651 (NKFLQEQPKT…LTQKIVWSIA (86 aa)). The segment at 656–676 (DKPKKIKKTPSKKKGTKKRAS) is disordered. Over residues 659-676 (KKIKKTPSKKKGTKKRAS) the composition is skewed to basic residues.

It belongs to the RNR ribonuclease family. RNase R subfamily.

It localises to the cytoplasm. The catalysed reaction is Exonucleolytic cleavage in the 3'- to 5'-direction to yield nucleoside 5'-phosphates.. In terms of biological role, 3'-5' exoribonuclease that releases 5'-nucleoside monophosphates and is involved in maturation of structured RNAs. The polypeptide is Ribonuclease R (Chlamydia pneumoniae (Chlamydophila pneumoniae)).